The following is a 121-amino-acid chain: Small ribosomal subunit protein uS13 (121 aa).

Residues proline 96–lysine 121 are disordered. Basic residues predominate over residues alanine 106 to lysine 121.

This sequence belongs to the universal ribosomal protein uS13 family. Part of the 30S ribosomal subunit. Forms a loose heterodimer with protein S19. Forms two bridges to the 50S subunit in the 70S ribosome.

Located at the top of the head of the 30S subunit, it contacts several helices of the 16S rRNA. In the 70S ribosome it contacts the 23S rRNA (bridge B1a) and protein L5 of the 50S subunit (bridge B1b), connecting the 2 subunits; these bridges are implicated in subunit movement. Contacts the tRNAs in the A and P-sites. This is Small ribosomal subunit protein uS13 from Streptococcus pneumoniae serotype 4 (strain ATCC BAA-334 / TIGR4).